The sequence spans 162 residues: Phosphopantetheine adenylyltransferase (162 aa).

Ser11 serves as a coordination point for substrate. Residues 11–12 and His19 contribute to the ATP site; that span reads SF. Lys43, Val76, and Arg90 together coordinate substrate. ATP contacts are provided by residues 91–93, Glu101, and 126–132; these read GLR and HLYISSS.

Belongs to the bacterial CoaD family. Homohexamer. Requires Mg(2+) as cofactor.

The protein localises to the cytoplasm. The enzyme catalyses (R)-4'-phosphopantetheine + ATP + H(+) = 3'-dephospho-CoA + diphosphate. It functions in the pathway cofactor biosynthesis; coenzyme A biosynthesis; CoA from (R)-pantothenate: step 4/5. Its function is as follows. Reversibly transfers an adenylyl group from ATP to 4'-phosphopantetheine, yielding dephospho-CoA (dPCoA) and pyrophosphate. The polypeptide is Phosphopantetheine adenylyltransferase (Streptococcus pneumoniae (strain 70585)).